A 545-amino-acid polypeptide reads, in one-letter code: Chaperonin GroEL (545 aa).

ATP-binding positions include 30 to 33, lysine 51, 87 to 91, glycine 416, 479 to 481, and aspartate 495; these read TMGP, DGTTT, and NAA.

This sequence belongs to the chaperonin (HSP60) family. Forms a cylinder of 14 subunits composed of two heptameric rings stacked back-to-back. Interacts with the co-chaperonin GroES.

The protein localises to the cytoplasm. It carries out the reaction ATP + H2O + a folded polypeptide = ADP + phosphate + an unfolded polypeptide.. Together with its co-chaperonin GroES, plays an essential role in assisting protein folding. The GroEL-GroES system forms a nano-cage that allows encapsulation of the non-native substrate proteins and provides a physical environment optimized to promote and accelerate protein folding. In Nautilia profundicola (strain ATCC BAA-1463 / DSM 18972 / AmH), this protein is Chaperonin GroEL.